The following is a 251-amino-acid chain: Hydroxyacylglutathione hydrolase (251 aa).

Residues His53, His55, Asp57, His58, His110, Asp127, and His165 each coordinate Zn(2+).

It belongs to the metallo-beta-lactamase superfamily. Glyoxalase II family. Monomer. The cofactor is Zn(2+).

The catalysed reaction is an S-(2-hydroxyacyl)glutathione + H2O = a 2-hydroxy carboxylate + glutathione + H(+). The protein operates within secondary metabolite metabolism; methylglyoxal degradation; (R)-lactate from methylglyoxal: step 2/2. Thiolesterase that catalyzes the hydrolysis of S-D-lactoyl-glutathione to form glutathione and D-lactic acid. The protein is Hydroxyacylglutathione hydrolase of Salmonella arizonae (strain ATCC BAA-731 / CDC346-86 / RSK2980).